The primary structure comprises 285 residues: MAHVIDGKAIAQSVREELRMEVERLKLNHQLTPGLAVVLVGADPASQVYVRNKKRACETAGIASFSHELAATTSQAELLALIEQLNQDDAVHGILVQLPLPKHIDEQKVLEAISPSKDADGFHPYNVGRLVTGDPTFQPCTPWGVMEMLKVSGVDPKGKHAVVIGRSNIVGKPVALMLLAAHATVTICHSRTPDLAETVKRADIVVAAVGRANMVPGSWIKKGAVVIDVGINRGEDGKLCGDVDYASCFEHASAITPVPGGVGPMTIAMLLKNTVEGAKRAHNIA.

NADP(+) contacts are provided by residues 165–167 (GRS), Ser190, and Ile231.

Belongs to the tetrahydrofolate dehydrogenase/cyclohydrolase family. Homodimer.

It carries out the reaction (6R)-5,10-methylene-5,6,7,8-tetrahydrofolate + NADP(+) = (6R)-5,10-methenyltetrahydrofolate + NADPH. The catalysed reaction is (6R)-5,10-methenyltetrahydrofolate + H2O = (6R)-10-formyltetrahydrofolate + H(+). Its pathway is one-carbon metabolism; tetrahydrofolate interconversion. In terms of biological role, catalyzes the oxidation of 5,10-methylenetetrahydrofolate to 5,10-methenyltetrahydrofolate and then the hydrolysis of 5,10-methenyltetrahydrofolate to 10-formyltetrahydrofolate. The chain is Bifunctional protein FolD from Magnetococcus marinus (strain ATCC BAA-1437 / JCM 17883 / MC-1).